A 370-amino-acid chain; its full sequence is MEILMTVSKFASICTMGANASALEKEIGPEQFPVNEHYFGLVNFGNTCYCNSVLQALYFCRPFRDKVLAYKSQPRKKESLLTCLADLFHSIATQKKKVGVIPPKKFITRLRKENELFDNYMQQDAHEFLNYLLNTIADILQEERKQEKQNGRLRNGDVDSEDNNSTPDPTWVHEIFQGTLTNETRCLTCETISSKDEDFLDLSVDVEQNTSITHCLRGFSNTETLCSEYKYYCEECRSKQEAHKRMKVKKLPMILALHLKRFKYMDQLHRYTKLSYRVVFPLELRLFNTSGDATNPDRMYDLVAVVVHCGSGPNRGHYIAIVKSHDFWLLFDDDIVEKIDAQAIEEFYGLTSDISKNSESGYILFYQSRD.

The short motif at 1–4 (MEIL) is the Required for plasma membrane localization of USP12/WDR20 element. The 331-residue stretch at 39 to 369 (FGLVNFGNTC…SGYILFYQSR (331 aa)) folds into the USP domain. Cys48 serves as the catalytic Nucleophile. Residues 146–157 (QEKQNGRLRNGD) are compositionally biased toward basic and acidic residues. The segment at 146–168 (QEKQNGRLRNGDVDSEDNNSTPD) is disordered. 4 residues coordinate Zn(2+): Cys186, Cys189, Cys233, and Cys236. The active-site Proton acceptor is His317.

Belongs to the peptidase C19 family. USP12/USP46 subfamily. Interacts with WDR48. Interacts with WDR20; this interaction promotes translocation of the USP12 complex to the plasma membrane. Component of the USP12-WDR20-WDR48 deubiquitinating complex. Component of the USP12-DMWD-WDR48 deubiquitinating complex. Interacts with PHLPP1. Interacts with RBPJ. Interacts with CBP; this interaction blocks the acetyltransferase activity of CREBBP. Interacts with ITCH; the interaction is more efficient when both USP12 and WDR48/UAF1 are involved and may mediate recruitment of the USP12 deubiquitinating complex to Notch.

The protein localises to the nucleus. Its subcellular location is the cytoplasm. It localises to the cell membrane. The catalysed reaction is Thiol-dependent hydrolysis of ester, thioester, amide, peptide and isopeptide bonds formed by the C-terminal Gly of ubiquitin (a 76-residue protein attached to proteins as an intracellular targeting signal).. With respect to regulation, activated by interaction with WDR20, WDR48 and DMWD through different allosteric mechanisms. Deubiquitinating enzyme that plays various roles in the regulation of the immune response and inflammation. During TCR engagement and activation, translocates into the cytoplasm and deubiquitinates its substrates LAT and TRAT1 and prevents their lysosome-dependent degradation to stabilize the TCR signaling complex at the plasma membrane. Plays an essential role in the selective LPS-induced macrophage response through the activation of NF-kappa-B pathway. In addition, promotes that antiviral immune response through targeting DNA sensor IFI16 to inhibit its proteasome-dependent degradation. Participates in the interferon signaling pathway and antiviral response independently of its deubiquitinase activity by maintaining nuclear phosphorylated STAT1 levels via inhibition of its CREBBP-mediated acetylation and subsequent dephosphorylation. Plays an intrinsic role in promoting the differentiation, activation and proliferation of CD4(+) T-cell by activating the NF-kappa-B signaling pathway through deubiquitinating and stabilizing B-cell lymphoma/leukemia 10/BCL10. In myeloid-derived suppressor cells promotes the activation of the NF-kappa-B via deubiquitination and stabilization of RELA. Regulates the 'Lys-63'-linked polyubiquitin chains of BAX and thereby modulates the mitochondrial apoptotic process. Negative regulator of NOTCH signaling that specifically deubiquitinates non-activated NOTCH receptors to target them for lysosomal degradation; deubiquitination of NOTCH stimulates its transport form late endosomes to lysosomes. Protects neurons against HTT/huntingtin-induced polyglutamine expansion-dependent neurodegeneration through regulation of autophagic flux. This function is independent of deubiquitinase activity or of other components of the USP12-WDR20-WDR48 deubiquitinating complex. In complex with WDR48, acts as a potential tumor suppressor by positively regulating PHLPP1 stability. The sequence is that of Ubiquitin carboxyl-terminal hydrolase 12 from Rattus norvegicus (Rat).